Consider the following 183-residue polypeptide: MAFNENRVINNYAEALMEVSGKQTAKVLSELQVIELVFERNKELAQTLDDVSVSSQQQEAFIGILGKGCSTTTKNFLETLADNRHFSLLEEIVENLDQRVSASNNHSLVIAKTAIPITAEQSKRLSKIAQKKFGYQHVEVKNVVDPNVIAGVILTAGSKTIDGSIKNKLVQLNNHIKQAVGKE.

This sequence belongs to the ATPase delta chain family. In terms of assembly, F-type ATPases have 2 components, F(1) - the catalytic core - and F(0) - the membrane proton channel. F(1) has five subunits: alpha(3), beta(3), gamma(1), delta(1), epsilon(1). F(0) has three main subunits: a(1), b(2) and c(10-14). The alpha and beta chains form an alternating ring which encloses part of the gamma chain. F(1) is attached to F(0) by a central stalk formed by the gamma and epsilon chains, while a peripheral stalk is formed by the delta and b chains.

It is found in the cell membrane. F(1)F(0) ATP synthase produces ATP from ADP in the presence of a proton or sodium gradient. F-type ATPases consist of two structural domains, F(1) containing the extramembraneous catalytic core and F(0) containing the membrane proton channel, linked together by a central stalk and a peripheral stalk. During catalysis, ATP synthesis in the catalytic domain of F(1) is coupled via a rotary mechanism of the central stalk subunits to proton translocation. Functionally, this protein is part of the stalk that links CF(0) to CF(1). It either transmits conformational changes from CF(0) to CF(1) or is implicated in proton conduction. The chain is ATP synthase subunit delta from Oenococcus oeni (strain ATCC BAA-331 / PSU-1).